The chain runs to 217 residues: Biotin transport regulator (217 aa).

A disordered region spans residues 14-49 (GDGLGNLAGRSADPTGAADKGESGVPVPPTGFVDPT).

Its function is as follows. May be part of a system that R.meliloti uses to respond to plant (alfalfa) biotin signals. The chain is Biotin transport regulator (bioS) from Rhizobium meliloti (strain 1021) (Ensifer meliloti).